A 122-amino-acid polypeptide reads, in one-letter code: Protein YqjC (122 aa).

Positions 1-20 are cleaved as a signal peptide; the sequence is MKYRIALAVSLFALSAGSYA. The segment at 65-100 is disordered; that stretch reads QLRADHQKKIAKQKDEVAERQQDLAEAKQKGDADKI. Basic and acidic residues predominate over residues 66–100; that stretch reads LRADHQKKIAKQKDEVAERQQDLAEAKQKGDADKI.

This is Protein YqjC (yqjC) from Escherichia coli (strain K12).